The primary structure comprises 447 residues: Dimethylsulfoniopropionate lyase DddP (447 aa).

Residues 1–26 (MNRHFNATRKIDPSRGATLGDGSPND) are disordered. 6 residues coordinate a divalent metal cation: aspartate 295, aspartate 297, aspartate 307, histidine 371, glutamate 406, and glutamate 421.

Belongs to the peptidase M24B family. Homodimer. The cofactor is a divalent metal cation.

It carries out the reaction S,S-dimethyl-beta-propiothetin = acrylate + dimethyl sulfide + H(+). Its function is as follows. Able to cleave dimethylsulfoniopropionate (DMSP), releasing dimethyl sulfide (DMS). DMS is the principal form by which sulfur is transported from oceans to the atmosphere. The real activity of the protein is however subject to debate and it is unclear whether it constitutes a real dimethylsulfoniopropionate lyase in vivo: the low activity with DMSP as substrate suggests that DMSP is not its native substrate. The sequence is that of Dimethylsulfoniopropionate lyase DddP from Roseobacter denitrificans (strain ATCC 33942 / OCh 114) (Erythrobacter sp. (strain OCh 114)).